The chain runs to 240 residues: Glutathione S-transferase theta-1 (240 aa).

One can recognise a GST N-terminal domain in the interval 2–82; it reads VLELYLDLLS…YLAHKYKVPD (81 aa). Residues histidine 40, 53-54, and 66-67 each bind glutathione; these read RV and ES. The GST C-terminal domain maps to 88–222; the sequence is DLQARARVDE…VILKVKDCPP (135 aa).

Belongs to the GST superfamily. Theta family. Homodimer. As to expression, in liver, highest expression found in central vein limiting plate hepatocytes. Also expressed in interlobular bile duct epithelial cells. In lung, expressed in club cells and ciliated cells of the bronchiolar epithelium and in type II alveolar cells of the lung parenchyma.

It is found in the cytoplasm. Its subcellular location is the nucleus. The enzyme catalyses RX + glutathione = an S-substituted glutathione + a halide anion + H(+). In terms of biological role, conjugation of reduced glutathione to a wide number of exogenous and endogenous hydrophobic electrophiles. Also binds steroids, bilirubin, carcinogens and numerous organic anions. Has dichloromethane dehalogenase activity. The protein is Glutathione S-transferase theta-1 (Gstt1) of Mus musculus (Mouse).